The primary structure comprises 147 residues: Deoxyuridine 5'-triphosphate nucleotidohydrolase (147 aa).

Substrate is bound by residues 67–69 (RSG), Asn80, and 84–86 (LID).

The protein belongs to the dUTPase family. Mg(2+) is required as a cofactor.

The enzyme catalyses dUTP + H2O = dUMP + diphosphate + H(+). It functions in the pathway pyrimidine metabolism; dUMP biosynthesis; dUMP from dCTP (dUTP route): step 2/2. This enzyme is involved in nucleotide metabolism: it produces dUMP, the immediate precursor of thymidine nucleotides and it decreases the intracellular concentration of dUTP so that uracil cannot be incorporated into DNA. This Dictyoglomus turgidum (strain DSM 6724 / Z-1310) protein is Deoxyuridine 5'-triphosphate nucleotidohydrolase.